A 259-amino-acid polypeptide reads, in one-letter code: Global transcriptional regulator CodY (259 aa).

A GAF domain region spans residues M1 to L155. The segment at residues A203–R222 is a DNA-binding region (H-T-H motif). At S215 the chain carries Phosphoserine.

It belongs to the CodY family.

The protein localises to the cytoplasm. In terms of biological role, DNA-binding global transcriptional regulator which is involved in the adaptive response to starvation and acts by directly or indirectly controlling the expression of numerous genes in response to nutrient availability. During rapid exponential growth, CodY is highly active and represses genes whose products allow adaptation to nutrient depletion. This Oceanobacillus iheyensis (strain DSM 14371 / CIP 107618 / JCM 11309 / KCTC 3954 / HTE831) protein is Global transcriptional regulator CodY.